The sequence spans 246 residues: Uridylate kinase (246 aa).

An ATP-binding site is contributed by 20-23 (KISG). The involved in allosteric activation by GTP stretch occupies residues 28–33 (GDQGYG). Gly62 contributes to the UMP binding site. 2 residues coordinate ATP: Gly63 and Arg67. UMP contacts are provided by residues Asp82 and 143-150 (TGNPYFTT). ATP-binding residues include Thr170, Tyr176, and Asp179.

Belongs to the UMP kinase family. As to quaternary structure, homohexamer.

Its subcellular location is the cytoplasm. It catalyses the reaction UMP + ATP = UDP + ADP. The protein operates within pyrimidine metabolism; CTP biosynthesis via de novo pathway; UDP from UMP (UMPK route): step 1/1. With respect to regulation, allosterically activated by GTP. Inhibited by UTP. Catalyzes the reversible phosphorylation of UMP to UDP. The chain is Uridylate kinase from Cereibacter sphaeroides (strain ATCC 17023 / DSM 158 / JCM 6121 / CCUG 31486 / LMG 2827 / NBRC 12203 / NCIMB 8253 / ATH 2.4.1.) (Rhodobacter sphaeroides).